The primary structure comprises 273 residues: Large ribosomal subunit protein uL2 (273 aa).

Residues 224-260 (AMNPVDHPHGGGEGKTSGGRHPVTPWGKKTKGKKTRK) are disordered. A compositionally biased stretch (basic residues) spans 251–260 (KKTKGKKTRK).

This sequence belongs to the universal ribosomal protein uL2 family. Part of the 50S ribosomal subunit. Forms a bridge to the 30S subunit in the 70S ribosome.

In terms of biological role, one of the primary rRNA binding proteins. Required for association of the 30S and 50S subunits to form the 70S ribosome, for tRNA binding and peptide bond formation. It has been suggested to have peptidyltransferase activity; this is somewhat controversial. Makes several contacts with the 16S rRNA in the 70S ribosome. The chain is Large ribosomal subunit protein uL2 from Orientia tsutsugamushi (strain Ikeda) (Rickettsia tsutsugamushi).